The chain runs to 489 residues: Glycogen synthase (489 aa).

Arginine 20 lines the ADP-alpha-D-glucose pocket.

The protein belongs to the glycosyltransferase 1 family. Bacterial/plant glycogen synthase subfamily.

The catalysed reaction is [(1-&gt;4)-alpha-D-glucosyl](n) + ADP-alpha-D-glucose = [(1-&gt;4)-alpha-D-glucosyl](n+1) + ADP + H(+). It functions in the pathway glycan biosynthesis; glycogen biosynthesis. Its function is as follows. Synthesizes alpha-1,4-glucan chains using ADP-glucose. This is Glycogen synthase from Chlorobium chlorochromatii (strain CaD3).